The chain runs to 230 residues: 2,3-bisphosphoglycerate-dependent phosphoglycerate mutase (230 aa).

Residues 8–15 (RHGESEWN), 21–22 (TG), arginine 60, 87–90 (ERHY), lysine 98, 114–115 (RR), and 183–184 (GN) contribute to the substrate site. Histidine 9 acts as the Tele-phosphohistidine intermediate in catalysis. The Proton donor/acceptor role is filled by glutamate 87.

This sequence belongs to the phosphoglycerate mutase family. BPG-dependent PGAM subfamily.

The catalysed reaction is (2R)-2-phosphoglycerate = (2R)-3-phosphoglycerate. It participates in carbohydrate degradation; glycolysis; pyruvate from D-glyceraldehyde 3-phosphate: step 3/5. In terms of biological role, catalyzes the interconversion of 2-phosphoglycerate and 3-phosphoglycerate. In Streptococcus agalactiae serotype Ia (strain ATCC 27591 / A909 / CDC SS700), this protein is 2,3-bisphosphoglycerate-dependent phosphoglycerate mutase.